The primary structure comprises 406 residues: Phosphopentomutase (406 aa).

Residues D10, D305, H310, D346, H347, and H358 each coordinate Mn(2+).

Belongs to the phosphopentomutase family. Requires Mn(2+) as cofactor.

The protein localises to the cytoplasm. It catalyses the reaction 2-deoxy-alpha-D-ribose 1-phosphate = 2-deoxy-D-ribose 5-phosphate. It carries out the reaction alpha-D-ribose 1-phosphate = D-ribose 5-phosphate. The protein operates within carbohydrate degradation; 2-deoxy-D-ribose 1-phosphate degradation; D-glyceraldehyde 3-phosphate and acetaldehyde from 2-deoxy-alpha-D-ribose 1-phosphate: step 1/2. Functionally, isomerase that catalyzes the conversion of deoxy-ribose 1-phosphate (dRib-1-P) and ribose 1-phosphate (Rib-1-P) to deoxy-ribose 5-phosphate (dRib-5-P) and ribose 5-phosphate (Rib-5-P), respectively. The chain is Phosphopentomutase from Allorhizobium ampelinum (strain ATCC BAA-846 / DSM 112012 / S4) (Agrobacterium vitis (strain S4)).